A 255-amino-acid chain; its full sequence is F-box only protein 44 (255 aa).

The 48-residue stretch at 3 to 50 (VGNINELPENILLELFTHVPARQLLLNCRLVCSLWRDLIDLVTLWKRK) folds into the F-box domain. The region spanning 71–252 (FYFLRSLHRN…VTNSSITIGP (182 aa)) is the FBA domain.

As to quaternary structure, part of a SCF (SKP1-cullin-F-box) protein ligase complex. Interacts with SKP1 and CUL1. As to expression, abundantly expressed in brain and kidney. Expressed at lower levels in heart, spleen and liver.

Functionally, substrate-recognition component of the SCF (SKP1-CUL1-F-box protein)-type E3 ubiquitin ligase complex. This is F-box only protein 44 (FBXO44) from Homo sapiens (Human).